The sequence spans 1314 residues: Condensin-2 complex subunit CAP-D3 (1314 aa).

10 HEAT repeats span residues E20 to R58, P98 to G136, K184 to N222, T231 to K267, N269 to V310, R331 to D360, S361 to G398, S417 to G455, F457 to D493, and E494 to L532. Residues D116–T150 are disordered. The segment covering G130 to R140 has biased composition (basic residues). A Nuclear localization signal motif is present at residues S789 to D796. 6 HEAT repeats span residues S821–A859, G878–T916, A917–V954, W956–P992, Q1053–Q1091, and K1138–N1179. Disordered stretches follow at residues M1210–R1237 and V1265–S1314.

As to quaternary structure, component of the condensin-2 complex. Present in buds.

The protein localises to the nucleus. The protein resides in the chromosome. Its function is as follows. Regulatory subunit of the condensin-2 complex, a complex which establishes mitotic chromosome architecture and is involved in physical rigidity of the chromatid axis. May promote the resolution of double-strand DNA catenanes (intertwines) between sister chromatids. Required for plant vigor, fertility, chromatin condensation and sister chromatid cohesion both during mitosis and meiosis. Necessary to maintain normal structural integrity of the meiotic chromosomes during the two nuclear divisions of gametogenesis, especially to prevent interchromosome connections at metaphase I. Seems also involved in crossover formation during meiotic prophase I. Prevents centromeric and pericentromeric heterochromatin repeats association. This Arabidopsis thaliana (Mouse-ear cress) protein is Condensin-2 complex subunit CAP-D3.